The chain runs to 268 residues: Undecaprenyl-diphosphatase (268 aa).

7 helical membrane-spanning segments follow: residues 47–67 (FAVL…FSKL), 85–105 (IGVL…GGLI), 109–129 (LFNP…LLWV), 144–164 (FPLP…FPGV), 184–204 (AAEF…VYDL), 217–237 (LIVA…VKTF), and 246–266 (FALF…ALAL).

This sequence belongs to the UppP family.

The protein localises to the cell inner membrane. It catalyses the reaction di-trans,octa-cis-undecaprenyl diphosphate + H2O = di-trans,octa-cis-undecaprenyl phosphate + phosphate + H(+). Functionally, catalyzes the dephosphorylation of undecaprenyl diphosphate (UPP). Confers resistance to bacitracin. The protein is Undecaprenyl-diphosphatase of Rhodopseudomonas palustris (strain BisA53).